The following is a 280-amino-acid chain: 4-diphosphocytidyl-2-C-methyl-D-erythritol kinase (280 aa).

Residue K8 is part of the active site. 91 to 101 (PVSAGLAGGSS) is an ATP binding site. The active site involves D133.

Belongs to the GHMP kinase family. IspE subfamily.

It catalyses the reaction 4-CDP-2-C-methyl-D-erythritol + ATP = 4-CDP-2-C-methyl-D-erythritol 2-phosphate + ADP + H(+). The protein operates within isoprenoid biosynthesis; isopentenyl diphosphate biosynthesis via DXP pathway; isopentenyl diphosphate from 1-deoxy-D-xylulose 5-phosphate: step 3/6. Its function is as follows. Catalyzes the phosphorylation of the position 2 hydroxy group of 4-diphosphocytidyl-2C-methyl-D-erythritol. In Clostridium novyi (strain NT), this protein is 4-diphosphocytidyl-2-C-methyl-D-erythritol kinase.